A 521-amino-acid chain; its full sequence is Glutamyl-tRNA(Gln) amidotransferase subunit A (521 aa).

Catalysis depends on charge relay system residues Lys-79 and Ser-187. The active-site Acyl-ester intermediate is the Ser-211.

Belongs to the amidase family. GatA subfamily. In terms of assembly, heterotrimer of A, B and C subunits.

The enzyme catalyses L-glutamyl-tRNA(Gln) + L-glutamine + ATP + H2O = L-glutaminyl-tRNA(Gln) + L-glutamate + ADP + phosphate + H(+). Functionally, allows the formation of correctly charged Gln-tRNA(Gln) through the transamidation of misacylated Glu-tRNA(Gln) in organisms which lack glutaminyl-tRNA synthetase. The reaction takes place in the presence of glutamine and ATP through an activated gamma-phospho-Glu-tRNA(Gln). This Mesorhizobium japonicum (strain LMG 29417 / CECT 9101 / MAFF 303099) (Mesorhizobium loti (strain MAFF 303099)) protein is Glutamyl-tRNA(Gln) amidotransferase subunit A.